A 420-amino-acid polypeptide reads, in one-letter code: Proteasome-activating nucleotidase (420 aa).

The disordered stretch occupies residues 1-25 (MRSHLVKPGSVYDGIEPGELGETTE). The stretch at 22 to 79 (ETTESVQDRVRQLESRNSFLEEQCSQIESEKRYLENQKIKYEREIRKLQSELDRMKTS) forms a coiled coil. Residues 203 to 208 (GTGKTL) and histidine 342 contribute to the ATP site. Residues 418 to 420 (MFV) form a docks into pockets in the proteasome alpha-ring to cause gate opening region.

The protein belongs to the AAA ATPase family. In terms of assembly, homohexamer. The hexameric complex has a two-ring architecture resembling a top hat that caps the 20S proteasome core at one or both ends. Upon ATP-binding, the C-terminus of PAN interacts with the alpha-rings of the proteasome core by binding to the intersubunit pockets.

The protein localises to the cytoplasm. Its function is as follows. ATPase which is responsible for recognizing, binding, unfolding and translocation of substrate proteins into the archaeal 20S proteasome core particle. Is essential for opening the gate of the 20S proteasome via an interaction with its C-terminus, thereby allowing substrate entry and access to the site of proteolysis. Thus, the C-termini of the proteasomal ATPase function like a 'key in a lock' to induce gate opening and therefore regulate proteolysis. Unfolding activity requires energy from ATP hydrolysis, whereas ATP binding alone promotes ATPase-20S proteasome association which triggers gate opening, and supports translocation of unfolded substrates. In Methanosarcina mazei (strain ATCC BAA-159 / DSM 3647 / Goe1 / Go1 / JCM 11833 / OCM 88) (Methanosarcina frisia), this protein is Proteasome-activating nucleotidase.